Consider the following 274-residue polypeptide: Bis(5'-nucleosyl)-tetraphosphatase, symmetrical (274 aa).

Belongs to the Ap4A hydrolase family.

The enzyme catalyses P(1),P(4)-bis(5'-adenosyl) tetraphosphate + H2O = 2 ADP + 2 H(+). Its function is as follows. Hydrolyzes diadenosine 5',5'''-P1,P4-tetraphosphate to yield ADP. The protein is Bis(5'-nucleosyl)-tetraphosphatase, symmetrical of Shewanella baltica (strain OS195).